We begin with the raw amino-acid sequence, 117 residues long: uncharacterized protein (117 aa).

Residues 10-32 traverse the membrane as a helical segment; that stretch reads VCYLGDIAASGFLNSIATALIAV.

Its subcellular location is the membrane. This is an uncharacterized protein from Rickettsia conorii (strain ATCC VR-613 / Malish 7).